We begin with the raw amino-acid sequence, 630 residues long: MDYSFDTTAEDPWVRISDCIKNLFSPIMSENPGHMPLQPNASLSEEDGTQGHPDGNPPKLDTANGTPKVYKSADRSTVKKGPPVAPKPAWFRQSLKGLRNRASDPRGLPDPALSTQPAPASREHLGPHIRASSSSSIKQRISSFETFGSSQLPDKGAQRLSLQPSSGEAAKPLGKHEGGRFSGLLGRGAAPTLVPQQPEQVLPSGSPAATEARDPGVSESPPPGLQPNQKTLPTGSDPLLRLLPTQTEKSQGPVLKMPSQRARSFPLTRSQSCETKLLDEKTSKLYSISSQVSSAVMKSLLCLPSSLSCAQTPCIPKEGASPTSSSNEDSAANGSAETSASDTGFSLNLSELREYTEGLTEAKEDDDGDHSSHQSGQSVISLLSSEELKQLIEEVKVLDEATLKQLDSIHVTILHKEEGAGLGFSLAGGADLENKVITVHKVFPNGLASQEGTIQKGNEVLSINGKSLKGTTHNDALAILRQAREPRQAVIVTRKLTAESMPDLNSTTDSAASASAASDVSVESSAEATVYTVTLEKMSAGLGFSLEGGKGSLHGDKPLTINRIFKGAASEQSETIQPGDEILQLAGTAMQGLTRFEAWNIIKALPDGPVTIVIRRKSLQPKETTAAADS.

2 disordered regions span residues 30 to 268 and 316 to 343; these read ENPG…FPLT and PKEG…ASDT. A compositionally biased stretch (low complexity) spans 129–143; the sequence is IRASSSSSIKQRISS. Position 220 is a phosphoserine (Ser-220). The segment covering 321 to 343 has biased composition (polar residues); the sequence is SPTSSSNEDSAANGSAETSASDT. An interaction with PPP1R12A, PPP1R12B and PPP1R12C region spans residues 404–500; that stretch reads KQLDSIHVTI…IVTRKLTAES (97 aa). 2 consecutive PDZ domains span residues 410-495 and 532-617; these read HVTI…VTRK and TVTL…IRRK.

As to quaternary structure, homotetramer. Pro-interleukin-16 interacts (via PDZ 2 domain) with PPP1R12A, PPP1R12B and PPP1R12C. Pro-interleukin-16 interacts with GRIN2A. Pro-interleukin-16 interacts with GABPB1. Pro-interleukin-16 interacts (via PDZ 3 domain) with HDAC3.

It is found in the secreted. Its subcellular location is the cytoplasm. It localises to the nucleus. Functionally, interleukin-16 stimulates a migratory response in CD4+ lymphocytes, monocytes, and eosinophils. Primes CD4+ T-cells for IL-2 and IL-15 responsiveness. Also induces T-lymphocyte expression of interleukin 2 receptor. Ligand for CD4. Pro-interleukin-16 is involved in cell cycle progression in T-cells. Appears to be involved in transcriptional regulation of SKP2 and is probably part of a transcriptional repression complex on the core promoter of the SKP2 gene. May act as a scaffold for GABPB1 (the DNA-binding subunit the GABP transcription factor complex) and HDAC3 thus maintaining transcriptional repression and blocking cell cycle progression in resting T-cells. The protein is Pro-interleukin-16 (IL16) of Macaca mulatta (Rhesus macaque).